Here is a 495-residue protein sequence, read N- to C-terminus: ATP synthase subunit beta, chloroplastic (495 aa).

172-179 (GGAGVGKT) is a binding site for ATP.

The protein belongs to the ATPase alpha/beta chains family. F-type ATPases have 2 components, CF(1) - the catalytic core - and CF(0) - the membrane proton channel. CF(1) has five subunits: alpha(3), beta(3), gamma(1), delta(1), epsilon(1). CF(0) has four main subunits: a(1), b(1), b'(1) and c(9-12).

It is found in the plastid. It localises to the chloroplast thylakoid membrane. It carries out the reaction ATP + H2O + 4 H(+)(in) = ADP + phosphate + 5 H(+)(out). In terms of biological role, produces ATP from ADP in the presence of a proton gradient across the membrane. The catalytic sites are hosted primarily by the beta subunits. This is ATP synthase subunit beta, chloroplastic from Barnardia japonica (Chinese squill).